We begin with the raw amino-acid sequence, 227 residues long: Pre-hexon-linking protein VIII (227 aa).

Threonine 64 bears the Phosphothreonine; by host mark. A propeptide spanning residues phenylalanine 112–alanine 157 is cleaved from the precursor. Residues serine 118 and serine 174 each carry the phosphoserine; by host modification.

The protein belongs to the adenoviridae hexon-linking protein family. As to quaternary structure, interacts with the peripentonal hexons as well as the hexons in the facets. Part of a complex composed of the core-capsid bridging protein, the endosome lysis protein VI and the hexon-linking protein VIII; these interactions bridge the virus core to the capsid. Cleaved by the viral protease during virion maturation. May cause the middle segment to be shed from the capsid.

Its subcellular location is the virion. The protein resides in the host nucleus. Functionally, structural component of the virion that acts as a cement protein on the capsid interior and which glue the peripentonal hexons and group-of-nine hexons together. This chain is Pre-hexon-linking protein VIII, found in Homo sapiens (Human).